Consider the following 309-residue polypeptide: Malate dehydrogenase (309 aa).

Residues 9–14 (GAGFVG) and Asp-33 each bind NAD(+). 2 residues coordinate substrate: Arg-82 and Arg-88. NAD(+) is bound by residues Asn-95 and 118–120 (VNN). Asn-120 and Arg-151 together coordinate substrate. The Proton acceptor role is filled by His-175.

The protein belongs to the LDH/MDH superfamily. MDH type 3 family.

The enzyme catalyses (S)-malate + NAD(+) = oxaloacetate + NADH + H(+). In terms of biological role, catalyzes the reversible oxidation of malate to oxaloacetate. The protein is Malate dehydrogenase of Roseiflexus castenholzii (strain DSM 13941 / HLO8).